The sequence spans 131 residues: Large ribosomal subunit protein bL12 (131 aa).

This sequence belongs to the bacterial ribosomal protein bL12 family. As to quaternary structure, homodimer. Part of the ribosomal stalk of the 50S ribosomal subunit. Forms a multimeric L10(L12)X complex, where L10 forms an elongated spine to which 2 to 4 L12 dimers bind in a sequential fashion. Binds GTP-bound translation factors.

Its function is as follows. Forms part of the ribosomal stalk which helps the ribosome interact with GTP-bound translation factors. Is thus essential for accurate translation. The sequence is that of Large ribosomal subunit protein bL12 from Prochlorococcus marinus (strain NATL1A).